We begin with the raw amino-acid sequence, 770 residues long: Jhy protein (770 aa).

Disordered stretches follow at residues 1–249, 295–438, 493–527, 595–647, and 708–740; these read MNKY…SKQY, TVQN…SFVS, HRHE…PQAE, ESQL…KRDV, and DYAK…KEGG. Residues 57 to 71 are compositionally biased toward basic and acidic residues; it reads SWSDIKDQIQDKDME. A compositionally biased stretch (acidic residues) spans 72-85; the sequence is PDSLEEDSPSETEE. Residues 112 to 134 show a composition bias toward basic and acidic residues; the sequence is HQVEDKYSDLRYDPNWKNKREEG. The segment covering 218 to 229 has biased composition (low complexity); sequence SGLSQYLKSSSS. Residues 295 to 314 are compositionally biased toward basic and acidic residues; sequence TVQNDKEVENTFMDPEDKWH. The segment covering 340 to 354 has biased composition (polar residues); the sequence is RGQSSDAANGQQPSR. A compositionally biased stretch (basic residues) spans 355–370; that stretch reads RTAKARVRKQRKHQKG. Residues 383–398 show a composition bias toward low complexity; that stretch reads QNNQNNPFQQPQNQRQ. The segment covering 410–438 has biased composition (polar residues); the sequence is AQTNASNPNLQDARTLTHNPKVTSDSFVS. Basic and acidic residues predominate over residues 493 to 509; that stretch reads HRHESPSQRAPQSDHHM. 2 stretches are compositionally biased toward basic residues: residues 510–521 and 625–642; these read NTHRSTKTKKPA and GKRH…LKGY.

As to expression, expressed in the brain, specifically in hypothalamus, pineal gland, and ependymal cells of the aqueduct of Sylvius, as well as in the choroid plexus of the third ventricle. Expressed in the ependymal cells lining the lateral ventricles (at protein level).

In terms of biological role, required for the normal development of cilia in brain ependymal cells lining the ventricular surfaces. This is Jhy protein from Mus musculus (Mouse).